The chain runs to 716 residues: ATP-dependent DNA helicase DinG (716 aa).

The region spanning 17–294 (ALQEQIPDFI…TCMEQFRPKT (278 aa)) is the Helicase ATP-binding domain. 54–61 (APTGVGKT) is an ATP binding site. Residue cysteine 120 coordinates [4Fe-4S] cluster. The DEAH box motif lies at 131-134 (EPTQ). [4Fe-4S] cluster-binding residues include cysteine 194, cysteine 199, and cysteine 205. Positions 248–251 (DEGH) match the DEAH box motif. The Helicase C-terminal domain occupies 517-698 (HIAEMAAFFR…VFPIEQPEVP (182 aa)).

The protein belongs to the helicase family. DinG subfamily. Type 1 sub-subfamily. The cofactor is [4Fe-4S] cluster.

It carries out the reaction Couples ATP hydrolysis with the unwinding of duplex DNA at the replication fork by translocating in the 5'-3' direction. This creates two antiparallel DNA single strands (ssDNA). The leading ssDNA polymer is the template for DNA polymerase III holoenzyme which synthesizes a continuous strand.. The catalysed reaction is ATP + H2O = ADP + phosphate + H(+). DNA-dependent ATPase and 5'-3' DNA helicase. Unwinds D-loops, R-loops, forked DNA and G-quadruplex DNA. This Escherichia coli O157:H7 protein is ATP-dependent DNA helicase DinG.